The sequence spans 127 residues: UPF0325 protein ASA_3165 (127 aa).

The protein belongs to the UPF0325 family.

This Aeromonas salmonicida (strain A449) protein is UPF0325 protein ASA_3165.